A 325-amino-acid chain; its full sequence is Tetraacyldisaccharide 4'-kinase (325 aa).

ATP is bound at residue 55-62 (TAGGNGKT).

The protein belongs to the LpxK family.

It catalyses the reaction a lipid A disaccharide + ATP = a lipid IVA + ADP + H(+). It functions in the pathway glycolipid biosynthesis; lipid IV(A) biosynthesis; lipid IV(A) from (3R)-3-hydroxytetradecanoyl-[acyl-carrier-protein] and UDP-N-acetyl-alpha-D-glucosamine: step 6/6. In terms of biological role, transfers the gamma-phosphate of ATP to the 4'-position of a tetraacyldisaccharide 1-phosphate intermediate (termed DS-1-P) to form tetraacyldisaccharide 1,4'-bis-phosphate (lipid IVA). The sequence is that of Tetraacyldisaccharide 4'-kinase from Salmonella arizonae (strain ATCC BAA-731 / CDC346-86 / RSK2980).